Here is a 355-residue protein sequence, read N- to C-terminus: UDP-N-acetylglucosamine--N-acetylmuramyl-(pentapeptide) pyrophosphoryl-undecaprenol N-acetylglucosamine transferase (355 aa).

UDP-N-acetyl-alpha-D-glucosamine-binding positions include 15–17, Asn-127, Arg-163, Ser-191, Ile-244, 263–268, and Gln-288; these read TGG and ALTVSE.

Belongs to the glycosyltransferase 28 family. MurG subfamily.

The protein resides in the cell inner membrane. The enzyme catalyses di-trans,octa-cis-undecaprenyl diphospho-N-acetyl-alpha-D-muramoyl-L-alanyl-D-glutamyl-meso-2,6-diaminopimeloyl-D-alanyl-D-alanine + UDP-N-acetyl-alpha-D-glucosamine = di-trans,octa-cis-undecaprenyl diphospho-[N-acetyl-alpha-D-glucosaminyl-(1-&gt;4)]-N-acetyl-alpha-D-muramoyl-L-alanyl-D-glutamyl-meso-2,6-diaminopimeloyl-D-alanyl-D-alanine + UDP + H(+). It functions in the pathway cell wall biogenesis; peptidoglycan biosynthesis. In terms of biological role, cell wall formation. Catalyzes the transfer of a GlcNAc subunit on undecaprenyl-pyrophosphoryl-MurNAc-pentapeptide (lipid intermediate I) to form undecaprenyl-pyrophosphoryl-MurNAc-(pentapeptide)GlcNAc (lipid intermediate II). This is UDP-N-acetylglucosamine--N-acetylmuramyl-(pentapeptide) pyrophosphoryl-undecaprenol N-acetylglucosamine transferase from Salmonella newport (strain SL254).